The chain runs to 255 residues: 3-deoxy-manno-octulosonate cytidylyltransferase (255 aa).

This sequence belongs to the KdsB family.

It is found in the cytoplasm. It catalyses the reaction 3-deoxy-alpha-D-manno-oct-2-ulosonate + CTP = CMP-3-deoxy-beta-D-manno-octulosonate + diphosphate. It participates in nucleotide-sugar biosynthesis; CMP-3-deoxy-D-manno-octulosonate biosynthesis; CMP-3-deoxy-D-manno-octulosonate from 3-deoxy-D-manno-octulosonate and CTP: step 1/1. It functions in the pathway bacterial outer membrane biogenesis; lipopolysaccharide biosynthesis. Its function is as follows. Activates KDO (a required 8-carbon sugar) for incorporation into bacterial lipopolysaccharide in Gram-negative bacteria. This chain is 3-deoxy-manno-octulosonate cytidylyltransferase, found in Psychromonas ingrahamii (strain DSM 17664 / CCUG 51855 / 37).